Reading from the N-terminus, the 414-residue chain is Serpin A3-6 (414 aa).

Residues 1 to 25 (MRTERVSPLLALGILVAGLCSRVHC) form the signal peptide. N-linked (GlcNAc...) asparagine glycosylation is found at asparagine 103, asparagine 183, asparagine 233, asparagine 267, and asparagine 321.

The protein belongs to the serpin family. As to quaternary structure, homodimer.

The protein localises to the cytoplasmic vesicle. It localises to the secretory vesicle. Its subcellular location is the chromaffin granule. It is found in the secreted. Functionally, serine protease inhibitor. In Bos taurus (Bovine), this protein is Serpin A3-6.